A 360-amino-acid chain; its full sequence is GTPase Obg (360 aa).

The Obg domain maps to 1 to 156 (MFVDSVEIII…KCVRLELKLI (156 aa)). An OBG-type G domain is found at 157–360 (ADIGLVGFPN…LKFVLLKALQ (204 aa)). GTP-binding positions include 163–170 (GFPNAGKS), 188–192 (FTTLV), 210–213 (DIPG), 279–282 (NKCD), and 341–343 (SAV). 2 residues coordinate Mg(2+): S170 and T190.

This sequence belongs to the TRAFAC class OBG-HflX-like GTPase superfamily. OBG GTPase family. As to quaternary structure, monomer. Mg(2+) is required as a cofactor.

Its subcellular location is the cytoplasm. In terms of biological role, an essential GTPase which binds GTP, GDP and possibly (p)ppGpp with moderate affinity, with high nucleotide exchange rates and a fairly low GTP hydrolysis rate. Plays a role in control of the cell cycle, stress response, ribosome biogenesis and in those bacteria that undergo differentiation, in morphogenesis control. The chain is GTPase Obg from Helicobacter pylori (strain J99 / ATCC 700824) (Campylobacter pylori J99).